The sequence spans 213 residues: CDP-diacylglycerol--inositol 3-phosphatidyltransferase (213 aa).

The Cytoplasmic portion of the chain corresponds to 1-5 (MPDEN). A helical transmembrane segment spans residues 6–26 (IFLFVPNLIGYARIVFAIISF). A topological domain (lumenal) is located at residue Y27. A helical transmembrane segment spans residues 28–48 (FMPCCPLTASSFYLLSGLLDA). D47 and D50 together coordinate Mg(2+). Residues 49–73 (FDGHAARALNQGTRFGAMLDMLTDR) lie on the Cytoplasmic side of the membrane. 3 residues coordinate a CDP-1,2-diacyl-sn-glycerol: G51, R55, and T61. D68 and D72 together coordinate Mg(2+). Catalysis depends on D72, which acts as the Proton acceptor. A helical membrane pass occupies residues 74–94 (CSTMCLLVNLALLYPGATLFF). Q95 is a topological domain (lumenal). Residues 96–116 (ISMSLDVASHWLHLHSSVVRG) form a helical membrane-spanning segment. At 117 to 139 (SESHKMIDLSGNPVLRIYYTSRP) the chain is on the cytoplasmic side. Residues 140–160 (ALFTLCAGNELFYCLLYLFHF) traverse the membrane as a helical segment. Residues 161-174 (SEGPLVGSVGLFRM) are Lumenal-facing. A helical transmembrane segment spans residues 175–195 (GLWVTAPIALLKSLISVIHLI). Residues 196-213 (TAARNMAALDAADRAKKK) are Cytoplasmic-facing.

This sequence belongs to the CDP-alcohol phosphatidyltransferase class-I family. Mn(2+) serves as cofactor. It depends on Mg(2+) as a cofactor. Detected in placenta (at protein level). Widely expressed. Higher expression in adult liver and skeletal muscle, slightly lower levels seen in pancreas, kidney, lung, placenta, brain, heart, leukocyte, colon, small intestine, ovary, testis, prostate, thymus and spleen. In fetus, expressed in kidney, liver, lung and brain.

Its subcellular location is the endoplasmic reticulum membrane. The protein localises to the cell membrane. It carries out the reaction a CDP-1,2-diacyl-sn-glycerol + myo-inositol = a 1,2-diacyl-sn-glycero-3-phospho-(1D-myo-inositol) + CMP + H(+). Inhibited by PtdIns (product inhibition), phosphatidylinositol phosphate, and nucleoside di- and tri-phosphates. Catalyzes the biosynthesis of phosphatidylinositol (PtdIns) as well as PtdIns:inositol exchange reaction. May thus act to reduce an excessive cellular PtdIns content. The exchange activity is due to the reverse reaction of PtdIns synthase and is dependent on CMP, which is tightly bound to the enzyme. This chain is CDP-diacylglycerol--inositol 3-phosphatidyltransferase, found in Homo sapiens (Human).